We begin with the raw amino-acid sequence, 467 residues long: Phosphoglucosamine mutase (467 aa).

Ser-120 (phosphoserine intermediate) is an active-site residue. Mg(2+) is bound by residues Ser-120, Asp-261, Asp-263, and Asp-265. Ser-120 is modified (phosphoserine).

It belongs to the phosphohexose mutase family. The cofactor is Mg(2+). In terms of processing, activated by phosphorylation.

The catalysed reaction is alpha-D-glucosamine 1-phosphate = D-glucosamine 6-phosphate. Functionally, catalyzes the conversion of glucosamine-6-phosphate to glucosamine-1-phosphate. The protein is Phosphoglucosamine mutase of Parafrankia sp. (strain EAN1pec).